We begin with the raw amino-acid sequence, 127 residues long: Small ribosomal subunit protein uS12 (127 aa).

Asp89 bears the 3-methylthioaspartic acid mark. Residues 104–127 (TQGVKDRKQARSKYGTKRAKAGKK) form a disordered region. Residues 113 to 127 (ARSKYGTKRAKAGKK) show a composition bias toward basic residues.

This sequence belongs to the universal ribosomal protein uS12 family. In terms of assembly, part of the 30S ribosomal subunit. Contacts proteins S8 and S17. May interact with IF1 in the 30S initiation complex.

With S4 and S5 plays an important role in translational accuracy. In terms of biological role, interacts with and stabilizes bases of the 16S rRNA that are involved in tRNA selection in the A site and with the mRNA backbone. Located at the interface of the 30S and 50S subunits, it traverses the body of the 30S subunit contacting proteins on the other side and probably holding the rRNA structure together. The combined cluster of proteins S8, S12 and S17 appears to hold together the shoulder and platform of the 30S subunit. The chain is Small ribosomal subunit protein uS12 from Herminiimonas arsenicoxydans.